Reading from the N-terminus, the 668-residue chain is CLK4-associating serine/arginine rich protein (668 aa).

Phosphoserine is present on Ser101. Disordered regions lie at residues 173 to 232 (AEVE…GMAD) and 252 to 668 (AKAL…HYRH). Acidic residues predominate over residues 182–214 (PEEEESPAEEESNSDEDEVIPDIDVEVDVDELN). Residues 265–283 (RRSRRQRREFREKRLRGRK) are compositionally biased toward basic residues. Residues Ser285 and Ser294 each carry the phosphoserine modification. Positions 290 to 313 (ARRDSPTYDPYKRSPSESSSESRS) are enriched in basic and acidic residues. Residue Thr327 is modified to Phosphothreonine. Residues Ser331 and Ser335 each carry the phosphoserine modification. Residues 340-353 (AAAAAAAAASGAAP) show a composition bias toward low complexity. Residues 354 to 365 (GKPPAPPQPGGP) show a composition bias toward pro residues. The span at 378-395 (SSSSASRTSSSRSSSRSS) shows a compositional bias: low complexity. Basic residues predominate over residues 396 to 435 (SRSRRGYYRSGRHARSRSRSWSRSRSRSRRYSRSRSRGRR). A compositionally biased stretch (basic and acidic residues) spans 436-446 (HSDGGSRDGHR). Positions 475-486 (RGARGPRHHSSS) are enriched in basic residues. Composition is skewed to low complexity over residues 487–510 (HSRSSWSLSPSRSRSLTRSGSRSQ) and 518–527 (QSHSQSQSHS). Position 541 is a phosphoserine (Ser541). Residue Thr567 is modified to Phosphothreonine. Residues 579-641 (ALNRQFKADK…ERQYSRQSRS (63 aa)) are a coiled coil. Composition is skewed to basic and acidic residues over residues 584 to 611 (FKADKKAAQEKMIQQEHERQEREDELRA) and 619 to 635 (KERERREKEREEWERQY). A compositionally biased stretch (low complexity) spans 636-645 (SRQSRSPSPR). Basic residues predominate over residues 653 to 668 (SRRRSRSRSRSPHYRH).

Belongs to the splicing factor SR family. As to quaternary structure, probably interacts with CLK4. In terms of processing, phosphorylated in vitro by CLK4.

The protein localises to the nucleus. Its function is as follows. Probably functions as an alternative splicing regulator. May regulate the mRNA splicing of genes such as CLK1. May act by regulating members of the CLK kinase family. This Rattus norvegicus (Rat) protein is CLK4-associating serine/arginine rich protein (Clasrp).